We begin with the raw amino-acid sequence, 692 residues long: Methionine--tRNA ligase (692 aa).

The short motif at 26 to 36 (PYANGSIHLGH) is the 'HIGH' region element. Zn(2+) contacts are provided by C157, C160, C170, and C173. The 'KMSKS' region signature appears at 342–346 (KMSKS). ATP is bound at residue K345. Positions 590 to 692 (DFAKVDLRIA…SGAQPGMRVK (103 aa)) constitute a tRNA-binding domain.

This sequence belongs to the class-I aminoacyl-tRNA synthetase family. MetG type 1 subfamily. In terms of assembly, homodimer. It depends on Zn(2+) as a cofactor.

It is found in the cytoplasm. It catalyses the reaction tRNA(Met) + L-methionine + ATP = L-methionyl-tRNA(Met) + AMP + diphosphate. Functionally, is required not only for elongation of protein synthesis but also for the initiation of all mRNA translation through initiator tRNA(fMet) aminoacylation. This is Methionine--tRNA ligase from Methylobacillus flagellatus (strain ATCC 51484 / DSM 6875 / VKM B-1610 / KT).